The primary structure comprises 336 residues: Glycerol-3-phosphate dehydrogenase [NAD(P)+] (336 aa).

5 residues coordinate NADPH: serine 11, tryptophan 12, arginine 33, arginine 34, and lysine 107. Sn-glycerol 3-phosphate is bound by residues lysine 107 and glycine 137. Residue alanine 141 coordinates NADPH. Sn-glycerol 3-phosphate is bound by residues lysine 192, aspartate 245, serine 255, arginine 256, and asparagine 257. The active-site Proton acceptor is lysine 192. Arginine 256 serves as a coordination point for NADPH. Glutamate 282 contributes to the NADPH binding site.

Belongs to the NAD-dependent glycerol-3-phosphate dehydrogenase family.

Its subcellular location is the cytoplasm. The enzyme catalyses sn-glycerol 3-phosphate + NAD(+) = dihydroxyacetone phosphate + NADH + H(+). The catalysed reaction is sn-glycerol 3-phosphate + NADP(+) = dihydroxyacetone phosphate + NADPH + H(+). The protein operates within membrane lipid metabolism; glycerophospholipid metabolism. Functionally, catalyzes the reduction of the glycolytic intermediate dihydroxyacetone phosphate (DHAP) to sn-glycerol 3-phosphate (G3P), the key precursor for phospholipid synthesis. The polypeptide is Glycerol-3-phosphate dehydrogenase [NAD(P)+] (Thermobifida fusca (strain YX)).